A 527-amino-acid polypeptide reads, in one-letter code: Peptide chain release factor 3 (527 aa).

Residues 9–278 (DIRRTFAIIS…GLTQWAPKPQ (270 aa)) enclose the tr-type G domain. Residues 18–25 (SHPDAGKT), 86–90 (DTPGH), and 140–143 (NKCD) each bind GTP.

This sequence belongs to the TRAFAC class translation factor GTPase superfamily. Classic translation factor GTPase family. PrfC subfamily.

Its subcellular location is the cytoplasm. Functionally, increases the formation of ribosomal termination complexes and stimulates activities of RF-1 and RF-2. It binds guanine nucleotides and has strong preference for UGA stop codons. It may interact directly with the ribosome. The stimulation of RF-1 and RF-2 is significantly reduced by GTP and GDP, but not by GMP. The chain is Peptide chain release factor 3 from Shewanella denitrificans (strain OS217 / ATCC BAA-1090 / DSM 15013).